The sequence spans 210 residues: Probable glutathione peroxidase 8 (210 aa).

A helical membrane pass occupies residues 13–35 (ASRAGLFKVLLSVALCMGSLYLL).

The protein belongs to the glutathione peroxidase family.

The protein resides in the membrane. The enzyme catalyses 2 glutathione + H2O2 = glutathione disulfide + 2 H2O. This chain is Probable glutathione peroxidase 8 (gpx8), found in Danio rerio (Zebrafish).